Reading from the N-terminus, the 215-residue chain is Vesicle-trafficking protein SEC22b-A (215 aa).

Over M1–R190 the chain is Cytoplasmic. The Longin domain maps to M6–I119. Positions N134 to A194 constitute a v-SNARE coiled-coil homology domain. Residues S191 to W213 traverse the membrane as a helical segment. The Lumenal portion of the chain corresponds to W214–L215.

Belongs to the synaptobrevin family. As to quaternary structure, component of 2 distinct SNARE complexes.

Its subcellular location is the endoplasmic reticulum membrane. The protein localises to the endoplasmic reticulum-Golgi intermediate compartment membrane. It localises to the golgi apparatus. The protein resides in the cis-Golgi network membrane. It is found in the trans-Golgi network membrane. Its subcellular location is the melanosome. SNARE involved in targeting and fusion of ER-derived transport vesicles with the Golgi complex as well as Golgi-derived retrograde transport vesicles with the ER. The polypeptide is Vesicle-trafficking protein SEC22b-A (Danio rerio (Zebrafish)).